We begin with the raw amino-acid sequence, 272 residues long: NAD kinase (272 aa).

Residue Asp-62 is the Proton acceptor of the active site. NAD(+) is bound by residues 62 to 63 (DG), Arg-67, 129 to 130 (NE), Arg-140, Lys-157, Asp-159, 170 to 175 (SSYSSS), Ala-194, and Gln-229.

It belongs to the NAD kinase family. A divalent metal cation serves as cofactor.

It localises to the cytoplasm. The enzyme catalyses NAD(+) + ATP = ADP + NADP(+) + H(+). Its function is as follows. Involved in the regulation of the intracellular balance of NAD and NADP, and is a key enzyme in the biosynthesis of NADP. Catalyzes specifically the phosphorylation on 2'-hydroxyl of the adenosine moiety of NAD to yield NADP. In Thermoplasma volcanium (strain ATCC 51530 / DSM 4299 / JCM 9571 / NBRC 15438 / GSS1), this protein is NAD kinase.